Here is a 103-residue protein sequence, read N- to C-terminus: Large ribosomal subunit protein uL24 (103 aa).

Belongs to the universal ribosomal protein uL24 family. In terms of assembly, part of the 50S ribosomal subunit.

In terms of biological role, one of two assembly initiator proteins, it binds directly to the 5'-end of the 23S rRNA, where it nucleates assembly of the 50S subunit. One of the proteins that surrounds the polypeptide exit tunnel on the outside of the subunit. The polypeptide is Large ribosomal subunit protein uL24 (Geobacillus stearothermophilus (Bacillus stearothermophilus)).